A 70-amino-acid chain; its full sequence is Frenatin 4.1 (70 aa).

A signal peptide spans 1 to 22 (MAFLKKSLFLVLFLGLVNLSIC). Positions 23-46 (EEEKREEENKEEEDENEALSEVKR) are excised as a propeptide. Lysine amide is present on Lys68.

This sequence belongs to the frog skin active peptide (FSAP) family. Frenatin subfamily. As to expression, expressed by the skin glands.

The protein resides in the secreted. Its subcellular location is the target cell membrane. Peptide with unknown function. Does not show antimicrobial activity against S.aureus (MIC&gt;512 ug/mL), E.coli (MIC&gt;512 ug/mL) and C.albicans (MIC&gt;512 ug/mL). Does not show hemolytic activity. Its function is as follows. Antimicrobial peptide with activity against E.coli (MIC=128 ug/mL or 54 uM) and C.albicans (MIC=256 ug/mL or 108 uM). Does not show activity against S.aureus (MIC&gt;512 ug/mL). Does not show hemolytic activity. This is Frenatin 4.1 from Nyctimystes infrafrenatus (White-lipped tree frog).